We begin with the raw amino-acid sequence, 202 residues long: Holliday junction branch migration complex subunit RuvA (202 aa).

Residues 1 to 62 form a domain I region; that stretch reads MIGYLRGRLH…EDAMELYGFT (62 aa). Residues 63 to 141 are domain II; the sequence is RPEELHLFTL…KSGLVDGTET (79 aa). Residues 141–145 form a flexible linker region; the sequence is TEAIP. Positions 146-202 are domain III; sequence AGGGDNDEALAALLALGYSREEIGPILARVRQELGNAAPTTAVLQAVLKTFGRGGGD.

The protein belongs to the RuvA family. As to quaternary structure, homotetramer. Forms an RuvA(8)-RuvB(12)-Holliday junction (HJ) complex. HJ DNA is sandwiched between 2 RuvA tetramers; dsDNA enters through RuvA and exits via RuvB. An RuvB hexamer assembles on each DNA strand where it exits the tetramer. Each RuvB hexamer is contacted by two RuvA subunits (via domain III) on 2 adjacent RuvB subunits; this complex drives branch migration. In the full resolvosome a probable DNA-RuvA(4)-RuvB(12)-RuvC(2) complex forms which resolves the HJ.

The protein resides in the cytoplasm. In terms of biological role, the RuvA-RuvB-RuvC complex processes Holliday junction (HJ) DNA during genetic recombination and DNA repair, while the RuvA-RuvB complex plays an important role in the rescue of blocked DNA replication forks via replication fork reversal (RFR). RuvA specifically binds to HJ cruciform DNA, conferring on it an open structure. The RuvB hexamer acts as an ATP-dependent pump, pulling dsDNA into and through the RuvAB complex. HJ branch migration allows RuvC to scan DNA until it finds its consensus sequence, where it cleaves and resolves the cruciform DNA. The polypeptide is Holliday junction branch migration complex subunit RuvA (Moorella thermoacetica (strain ATCC 39073 / JCM 9320)).